A 225-amino-acid chain; its full sequence is Enolase-phosphatase E1 (225 aa).

This sequence belongs to the HAD-like hydrolase superfamily. MasA/MtnC family. In terms of assembly, monomer. Mg(2+) is required as a cofactor.

The enzyme catalyses 5-methylsulfanyl-2,3-dioxopentyl phosphate + H2O = 1,2-dihydroxy-5-(methylsulfanyl)pent-1-en-3-one + phosphate. Its pathway is amino-acid biosynthesis; L-methionine biosynthesis via salvage pathway; L-methionine from S-methyl-5-thio-alpha-D-ribose 1-phosphate: step 3/6. It functions in the pathway amino-acid biosynthesis; L-methionine biosynthesis via salvage pathway; L-methionine from S-methyl-5-thio-alpha-D-ribose 1-phosphate: step 4/6. Functionally, bifunctional enzyme that catalyzes the enolization of 2,3-diketo-5-methylthiopentyl-1-phosphate (DK-MTP-1-P) into the intermediate 2-hydroxy-3-keto-5-methylthiopentenyl-1-phosphate (HK-MTPenyl-1-P), which is then dephosphorylated to form the acireductone 1,2-dihydroxy-3-keto-5-methylthiopentene (DHK-MTPene). The protein is Enolase-phosphatase E1 of Shewanella piezotolerans (strain WP3 / JCM 13877).